The primary structure comprises 184 residues: uncharacterized protein (184 aa).

The tract at residues 146–177 (HPKTSLAQQPNAKATQPPLSKETLNTAKETDP) is disordered. Residues 150–172 (SLAQQPNAKATQPPLSKETLNTA) show a composition bias toward polar residues.

This is an uncharacterized protein from Picosynechococcus sp. (strain ATCC 27264 / PCC 7002 / PR-6) (Agmenellum quadruplicatum).